The chain runs to 591 residues: Aspartate--tRNA(Asp/Asn) ligase (591 aa).

An L-aspartate-binding site is contributed by Glu-175. The interval 199-202 (QQYK) is aspartate. Positions 221 and 450 each coordinate L-aspartate. ATP is bound at residue 221–223 (RDE). Residue Glu-484 participates in ATP binding. Position 491 (Arg-491) interacts with L-aspartate. 536–539 (GVDR) contributes to the ATP binding site.

The protein belongs to the class-II aminoacyl-tRNA synthetase family. Type 1 subfamily. As to quaternary structure, homodimer.

It is found in the cytoplasm. It carries out the reaction tRNA(Asx) + L-aspartate + ATP = L-aspartyl-tRNA(Asx) + AMP + diphosphate. Its function is as follows. Aspartyl-tRNA synthetase with relaxed tRNA specificity since it is able to aspartylate not only its cognate tRNA(Asp) but also tRNA(Asn). Reaction proceeds in two steps: L-aspartate is first activated by ATP to form Asp-AMP and then transferred to the acceptor end of tRNA(Asp/Asn). The chain is Aspartate--tRNA(Asp/Asn) ligase from Rhodopseudomonas palustris (strain ATCC BAA-98 / CGA009).